A 251-amino-acid polypeptide reads, in one-letter code: 1-(5-phosphoribosyl)-5-[(5-phosphoribosylamino)methylideneamino] imidazole-4-carboxamide isomerase (251 aa).

Asp-8 serves as the catalytic Proton acceptor. The active-site Proton donor is the Asp-131.

Belongs to the HisA/HisF family.

The protein localises to the cytoplasm. It catalyses the reaction 1-(5-phospho-beta-D-ribosyl)-5-[(5-phospho-beta-D-ribosylamino)methylideneamino]imidazole-4-carboxamide = 5-[(5-phospho-1-deoxy-D-ribulos-1-ylimino)methylamino]-1-(5-phospho-beta-D-ribosyl)imidazole-4-carboxamide. It functions in the pathway amino-acid biosynthesis; L-histidine biosynthesis; L-histidine from 5-phospho-alpha-D-ribose 1-diphosphate: step 4/9. The polypeptide is 1-(5-phosphoribosyl)-5-[(5-phosphoribosylamino)methylideneamino] imidazole-4-carboxamide isomerase (Thiobacillus denitrificans (strain ATCC 25259 / T1)).